Consider the following 517-residue polypeptide: Putative ribose/galactose/methyl galactoside import ATP-binding protein 1 (517 aa).

ABC transporter domains lie at 23–258 (LQLQ…VGRP) and 269–515 (TPTD…SGRS). 55–62 (GENGAGKS) is a binding site for ATP.

Belongs to the ABC transporter superfamily. Carbohydrate importer 2 (CUT2) (TC 3.A.1.2) family.

It localises to the cell inner membrane. The enzyme catalyses D-ribose(out) + ATP + H2O = D-ribose(in) + ADP + phosphate + H(+). The catalysed reaction is D-galactose(out) + ATP + H2O = D-galactose(in) + ADP + phosphate + H(+). In terms of biological role, part of an ABC transporter complex involved in carbohydrate import. Could be involved in ribose, galactose and/or methyl galactoside import. Responsible for energy coupling to the transport system. This Burkholderia ambifaria (strain ATCC BAA-244 / DSM 16087 / CCUG 44356 / LMG 19182 / AMMD) (Burkholderia cepacia (strain AMMD)) protein is Putative ribose/galactose/methyl galactoside import ATP-binding protein 1.